The chain runs to 240 residues: Ribonuclease HII (240 aa).

One can recognise an RNase H type-2 domain in the interval 27–226 (GPVAGVDEAG…GETRSLRLED (200 aa)). Positions 33, 34, and 127 each coordinate a divalent metal cation.

The protein belongs to the RNase HII family. Mn(2+) serves as cofactor. Requires Mg(2+) as cofactor.

It localises to the cytoplasm. It catalyses the reaction Endonucleolytic cleavage to 5'-phosphomonoester.. Functionally, endonuclease that specifically degrades the RNA of RNA-DNA hybrids. This is Ribonuclease HII from Parafrankia sp. (strain EAN1pec).